A 289-amino-acid chain; its full sequence is Pre-mRNA-splicing factor cwf23 (289 aa).

Residues 9 to 74 enclose the J domain; it reads DYYELLGINE…QLRKAYDSER (66 aa). A compositionally biased stretch (basic and acidic residues) spans 129-148; the sequence is ESANLRRQRENRLREEQEQS. 2 disordered regions span residues 129 to 161 and 269 to 289; these read ESAN…SKIS and KQKH…TMNA.

The protein belongs to the DnaJ family. Belongs to the 40S cdc5-associated complex (or cwf complex), a spliceosome sub-complex reminiscent of a late-stage spliceosome composed of the U2, U5 and U6 snRNAs and at least brr2, cdc5, cwf2/prp3, cwf3/syf1, cwf4/syf3, cwf5/ecm2, spp42/cwf6, cwf7/spf27, cwf8, cwf9, cwf10, cwf11, cwf12, prp45/cwf13, cwf14, cwf15, cwf16, cwf17, cwf18, cwf19, cwf20, cwf21, cwf22, cwf23, cwf24, cwf25, cwf26, cyp7/cwf27, cwf28, cwf29/ist3, lea1, msl1, prp5/cwf1, prp10, prp12/sap130, prp17, prp22, sap61, sap62, sap114, sap145, slu7, smb1, smd1, smd3, smf1, smg1 and syf2.

It localises to the cytoplasm. It is found in the nucleus. Its function is as follows. Involved in pre-mRNA splicing. May be involved in endoplasmic reticulum-associated protein degradation (ERAD) and required for growth at low and high temperatures. This is Pre-mRNA-splicing factor cwf23 (cwf23) from Schizosaccharomyces pombe (strain 972 / ATCC 24843) (Fission yeast).